The chain runs to 266 residues: Translation initiation factor 2 subunit alpha (266 aa).

Positions 10–81 (GELVVGKIDE…SAQQIDLSIK (72 aa)) constitute an S1 motif domain. Residues 233 to 266 (AEDALEESADRAAKVVEQHGGSGQFHRERSEDDE) form a disordered region. Composition is skewed to basic and acidic residues over residues 240–249 (SADRAAKVVE) and 257–266 (FHRERSEDDE).

This sequence belongs to the eIF-2-alpha family. Heterotrimer composed of an alpha, a beta and a gamma chain.

Functionally, eIF-2 functions in the early steps of protein synthesis by forming a ternary complex with GTP and initiator tRNA. The protein is Translation initiation factor 2 subunit alpha of Haloarcula marismortui (strain ATCC 43049 / DSM 3752 / JCM 8966 / VKM B-1809) (Halobacterium marismortui).